The sequence spans 343 residues: Anthranilate phosphoribosyltransferase (343 aa).

5-phospho-alpha-D-ribose 1-diphosphate contacts are provided by residues Gly84, 87 to 88 (GD), Thr92, 94 to 97 (NIST), 112 to 120 (KHGNRGVSS), and Ser124. Anthranilate is bound at residue Gly84. Residue Ser96 participates in Mg(2+) binding. Anthranilate is bound at residue Asn115. An anthranilate-binding site is contributed by Arg170. Asp229 and Glu230 together coordinate Mg(2+).

This sequence belongs to the anthranilate phosphoribosyltransferase family. Homodimer. Mg(2+) is required as a cofactor.

The enzyme catalyses N-(5-phospho-beta-D-ribosyl)anthranilate + diphosphate = 5-phospho-alpha-D-ribose 1-diphosphate + anthranilate. It functions in the pathway amino-acid biosynthesis; L-tryptophan biosynthesis; L-tryptophan from chorismate: step 2/5. Catalyzes the transfer of the phosphoribosyl group of 5-phosphorylribose-1-pyrophosphate (PRPP) to anthranilate to yield N-(5'-phosphoribosyl)-anthranilate (PRA). This Burkholderia ambifaria (strain ATCC BAA-244 / DSM 16087 / CCUG 44356 / LMG 19182 / AMMD) (Burkholderia cepacia (strain AMMD)) protein is Anthranilate phosphoribosyltransferase.